A 152-amino-acid polypeptide reads, in one-letter code: Prefoldin subunit alpha (152 aa).

The tract at residues 110-152 (ETQEEVDELESESQELEQQAQQMQQQMQQQQMQQMQQSQGDEE) is disordered. Residues 111–124 (TQEEVDELESESQE) show a composition bias toward acidic residues. Low complexity predominate over residues 125–152 (LEQQAQQMQQQMQQQQMQQMQQSQGDEE).

The protein belongs to the prefoldin alpha subunit family. As to quaternary structure, heterohexamer of two alpha and four beta subunits.

The protein localises to the cytoplasm. Its function is as follows. Molecular chaperone capable of stabilizing a range of proteins. Seems to fulfill an ATP-independent, HSP70-like function in archaeal de novo protein folding. The protein is Prefoldin subunit alpha of Halorubrum lacusprofundi (strain ATCC 49239 / DSM 5036 / JCM 8891 / ACAM 34).